The primary structure comprises 170 residues: UPF0316 protein CLJ_B0679 (170 aa).

2 helical membrane-spanning segments follow: residues 1–21 (MLSY…LMTI) and 36–56 (IIGF…LSGI).

The protein belongs to the UPF0316 family.

It is found in the cell membrane. The chain is UPF0316 protein CLJ_B0679 from Clostridium botulinum (strain 657 / Type Ba4).